We begin with the raw amino-acid sequence, 402 residues long: FMN-dependent alpha-hydroxy acid dehydrogenase qulF (402 aa).

The FMN hydroxy acid dehydrogenase domain maps to 22–394; sequence RLPAITTNPT…NRDCMRRISY (373 aa). Y48 contributes to the a 2-oxocarboxylate binding site. Residues S130 and Q152 each coordinate FMN. Residues Y154 and R189 each coordinate a 2-oxocarboxylate. K265 contacts FMN. The Proton acceptor role is filled by H289. Residue R292 coordinates a 2-oxocarboxylate. Residues 320-324 and 343-344 each bind FMN; these read DSGVR and GR.

This sequence belongs to the FMN-dependent alpha-hydroxy acid dehydrogenase family. FMN serves as cofactor.

Functionally, FMN-dependent alpha-hydroxy acid dehydrogenase; part of the gene cluster that mediates the biosynthesis of quinolactacin A2 (QUL A2), a fungal alkaloid that features a quinolone-gamma-lactam hybrid, which is a potential pharmacophore for the treatment of cancer and Alzheimer's disease. The quinolone-gamma-lactam hybrid scaffold is synthesized from the combination of L-isoleucine (L-Ile) and the nonproteinogenic amino acid L-kynurenine, followed by quinolone cyclization, oxidative decarboxylation, and lactam formation. Additionally, the N-methyl group is derived from methionine, which might be catalyzed by an S-adenosylmethionine (SAM)-dependent methyltransferase. Bioconversion of L-tryptophan to L-kynurenine could be catalyzed by the indoleamine-2,3-dioxygenase (IDO) qulI to produce an unstable product, N-formyl-L-kynurenine, followed by kynurenine formamidase catalyzed hydrolysis. QulM then acts as a methyltransferase that methylates L-kynurenine at the N-4 position. The FMN-dependent alpha-hydroxy acid dehydrogenase qulF than functions as an oxidative decarboxylase which converts N-methylkynurenine into 2-aminobenzoylacetamide via 2 tandem reactions, including dehydrogenation and decarboxylation. An amidase located outside of the qul gene cluster further produces the unstable beta-keto acid precursor N-methyl-2-aminobenzoylacetate, which could be spontaneously dehydrated to form N-methyl-4-hydroxy-2-quinolone. The NRPS qulB is able to incorporate N-methyl-2-aminobenzoylacetate and efficiently compete with the spontaneous reaction. By further extending the beta-keto acid with L-Ile, qulA performs a Dieckmann condensation to form the gamma-lactam ring and release a 4-ketopyrrolidinone intermediate from the assembly line. This intermediate could plausibly further undergo a spontaneous cyclization to yield the final quinolone-gamma-lactam hybrid structure. The polypeptide is FMN-dependent alpha-hydroxy acid dehydrogenase qulF (Penicillium citrinum).